We begin with the raw amino-acid sequence, 246 residues long: Trypsin V-B (246 aa).

Residues 1–15 form the signal peptide; it reads MKICIFFTLLGTVAA. A propeptide spans 16-24 (activation peptide); that stretch reads FPTEDNDDR. In terms of domain architecture, Peptidase S1 spans 25 to 244; it reads IVGGYTCQEH…YLNWIQQTVA (220 aa). Disulfide bonds link C31–C160, C49–C65, C133–C233, C140–C206, C171–C185, and C196–C220. Catalysis depends on H64, which acts as the Charge relay system. Ca(2+) is bound by residues E76, N78, and E86. The active-site Charge relay system is D108. S200 acts as the Charge relay system in catalysis.

It belongs to the peptidase S1 family. It depends on Ca(2+) as a cofactor.

Its subcellular location is the secreted. The protein localises to the extracellular space. It carries out the reaction Preferential cleavage: Arg-|-Xaa, Lys-|-Xaa.. The protein is Trypsin V-B of Rattus norvegicus (Rat).